The following is a 179-amino-acid chain: Cell division protein ZapC (179 aa).

This sequence belongs to the ZapC family. Interacts directly with FtsZ.

It localises to the cytoplasm. Contributes to the efficiency of the cell division process by stabilizing the polymeric form of the cell division protein FtsZ. Acts by promoting interactions between FtsZ protofilaments and suppressing the GTPase activity of FtsZ. The polypeptide is Cell division protein ZapC (Ferrimonas balearica (strain DSM 9799 / CCM 4581 / KCTC 23876 / PAT)).